We begin with the raw amino-acid sequence, 234 residues long: 3-deoxy-manno-octulosonate cytidylyltransferase (234 aa).

Belongs to the KdsB family.

It is found in the cytoplasm. The enzyme catalyses 3-deoxy-alpha-D-manno-oct-2-ulosonate + CTP = CMP-3-deoxy-beta-D-manno-octulosonate + diphosphate. It functions in the pathway nucleotide-sugar biosynthesis; CMP-3-deoxy-D-manno-octulosonate biosynthesis; CMP-3-deoxy-D-manno-octulosonate from 3-deoxy-D-manno-octulosonate and CTP: step 1/1. It participates in bacterial outer membrane biogenesis; lipopolysaccharide biosynthesis. Functionally, activates KDO (a required 8-carbon sugar) for incorporation into bacterial lipopolysaccharide in Gram-negative bacteria. The polypeptide is 3-deoxy-manno-octulosonate cytidylyltransferase (Aquifex aeolicus (strain VF5)).